The following is a 70-amino-acid chain: Beta-defensin 107 (70 aa).

The signal sequence occupies residues Met1 to Thr26. Disulfide bonds link Cys41–Cys55 and Cys45–Cys64.

This sequence belongs to the beta-defensin family. In terms of tissue distribution, specifically expressed in testis.

Its subcellular location is the secreted. Has antibacterial activity. The polypeptide is Beta-defensin 107 (DEFB107A) (Homo sapiens (Human)).